The following is a 214-amino-acid chain: Adenylate kinase (214 aa).

An ATP-binding site is contributed by 10-15 (GVGKGT). The NMP stretch occupies residues 30–59 (STGDILRAAVKELTPMGAKAKGYMDSGALV). Residues T31, R36, 57–59 (ALV), 85–88 (GFPR), and Q92 contribute to the AMP site. The segment at 126 to 163 (GRRACANCGAGYHVDFAPSKVAGVCDACSGQLVQREDD) is LID. Position 127 (R127) interacts with ATP. Zn(2+) contacts are provided by C130, C133, C150, and C153. AMP is bound by residues R160 and R171. Residue G199 participates in ATP binding.

Belongs to the adenylate kinase family. Monomer.

It is found in the cytoplasm. It carries out the reaction AMP + ATP = 2 ADP. The protein operates within purine metabolism; AMP biosynthesis via salvage pathway; AMP from ADP: step 1/1. Catalyzes the reversible transfer of the terminal phosphate group between ATP and AMP. Plays an important role in cellular energy homeostasis and in adenine nucleotide metabolism. The sequence is that of Adenylate kinase from Geobacter sp. (strain M21).